Reading from the N-terminus, the 1416-residue chain is DNA-directed RNA polymerase subunit beta' (1416 aa).

The Zn(2+) site is built by Cys-68, Cys-70, Cys-83, and Cys-86. Mg(2+) is bound by residues Asp-458, Asp-460, and Asp-462. Cys-811, Cys-884, Cys-891, and Cys-894 together coordinate Zn(2+).

The protein belongs to the RNA polymerase beta' chain family. The RNAP catalytic core consists of 2 alpha, 1 beta, 1 beta' and 1 omega subunit. When a sigma factor is associated with the core the holoenzyme is formed, which can initiate transcription. Mg(2+) serves as cofactor. It depends on Zn(2+) as a cofactor.

It carries out the reaction RNA(n) + a ribonucleoside 5'-triphosphate = RNA(n+1) + diphosphate. In terms of biological role, DNA-dependent RNA polymerase catalyzes the transcription of DNA into RNA using the four ribonucleoside triphosphates as substrates. The protein is DNA-directed RNA polymerase subunit beta' of Francisella philomiragia subsp. philomiragia (strain ATCC 25017 / CCUG 19701 / FSC 153 / O#319-036).